The primary structure comprises 200 residues: Interferon lambda-2 (200 aa).

The N-terminal stretch at 1–25 is a signal peptide; that stretch reads MKLDMTGDCTPVLVLMAAVLTVTGA.

This sequence belongs to the lambda interferon family.

The protein localises to the secreted. Its function is as follows. Cytokine with antiviral, antitumour and immunomodulatory activities. Plays a critical role in the antiviral host defense, predominantly in the epithelial tissues. Acts as a ligand for the heterodimeric class II cytokine receptor composed of IL10RB and IFNLR1, and receptor engagement leads to the activation of the JAK/STAT signaling pathway resulting in the expression of IFN-stimulated genes (ISG), which mediate the antiviral state. Has a restricted receptor distribution and therefore restricted targets: is primarily active in epithelial cells and this cell type-selective action is because of the epithelial cell-specific expression of its receptor IFNLR1. Seems not to be essential for early virus-activated host defense in vaginal infection, but plays an important role in Toll-like receptor (TLR)-induced antiviral defense. Plays a significant role in the antiviral immune defense in the intestinal epithelium. Exerts an immunomodulatory effect by up-regulating MHC class I antigen expression. This is Interferon lambda-2 (IFNL2) from Homo sapiens (Human).